Here is a 568-residue protein sequence, read N- to C-terminus: Oxygen-dependent choline dehydrogenase (568 aa).

8-37 (DYVIIGGGSAGSVLGNRLTEDKDKEVLVLE) provides a ligand contact to FAD. His-473 functions as the Proton acceptor in the catalytic mechanism.

Belongs to the GMC oxidoreductase family. It depends on FAD as a cofactor.

The enzyme catalyses choline + A = betaine aldehyde + AH2. It catalyses the reaction betaine aldehyde + NAD(+) + H2O = glycine betaine + NADH + 2 H(+). Its pathway is amine and polyamine biosynthesis; betaine biosynthesis via choline pathway; betaine aldehyde from choline (cytochrome c reductase route): step 1/1. Functionally, involved in the biosynthesis of the osmoprotectant glycine betaine. Catalyzes the oxidation of choline to betaine aldehyde and betaine aldehyde to glycine betaine at the same rate. This Staphylococcus haemolyticus (strain JCSC1435) protein is Oxygen-dependent choline dehydrogenase.